The chain runs to 585 residues: A-type ATP synthase subunit A (585 aa).

Position 231–238 (231–238) interacts with ATP; the sequence is GPFGSGKT.

The protein belongs to the ATPase alpha/beta chains family. As to quaternary structure, has multiple subunits with at least A(3), B(3), C, D, E, F, H, I and proteolipid K(x).

It is found in the cell membrane. The catalysed reaction is ATP + H2O + 4 H(+)(in) = ADP + phosphate + 5 H(+)(out). Produces ATP from ADP in the presence of a proton gradient across the membrane. The archaeal alpha chain is a catalytic subunit. Its function is as follows. Component of the A-type ATP synthase that produces ATP from ADP in the presence of a proton gradient across the membrane. The A chain is the catalytic subunit. This is A-type ATP synthase subunit A from Thermococcus sp. (strain KI).